A 388-amino-acid polypeptide reads, in one-letter code: Succinate--CoA ligase [ADP-forming] subunit beta (388 aa).

In terms of domain architecture, ATP-grasp spans 9 to 245 (KELLAKYGLP…KSQENERELK (237 aa)). Residues Lys-46, 53 to 55 (GRG), Glu-100, Tyr-103, and Glu-108 contribute to the ATP site. Asn-200 and Asp-214 together coordinate Mg(2+). Residues Asn-265 and 322–324 (GIV) each bind substrate.

The protein belongs to the succinate/malate CoA ligase beta subunit family. Heterotetramer of two alpha and two beta subunits. Requires Mg(2+) as cofactor.

It catalyses the reaction succinate + ATP + CoA = succinyl-CoA + ADP + phosphate. It carries out the reaction GTP + succinate + CoA = succinyl-CoA + GDP + phosphate. The protein operates within carbohydrate metabolism; tricarboxylic acid cycle; succinate from succinyl-CoA (ligase route): step 1/1. Succinyl-CoA synthetase functions in the citric acid cycle (TCA), coupling the hydrolysis of succinyl-CoA to the synthesis of either ATP or GTP and thus represents the only step of substrate-level phosphorylation in the TCA. The beta subunit provides nucleotide specificity of the enzyme and binds the substrate succinate, while the binding sites for coenzyme A and phosphate are found in the alpha subunit. In Laribacter hongkongensis (strain HLHK9), this protein is Succinate--CoA ligase [ADP-forming] subunit beta.